Here is a 477-residue protein sequence, read N- to C-terminus: Methionine aminopeptidase 2 (477 aa).

A disordered region spans residues 1 to 121 (MAGVEEAASC…TDPPSVPICD (121 aa)). Alanine 2 carries the N-acetylalanine modification. Residues 36–46 (KKKKRKKKKSK) are compositionally biased toward basic residues. Serine 45 is subject to Phosphoserine. Basic and acidic residues predominate over residues 54–78 (EPDKEAGASVDEVTRQLERQALEEK). Serine 62 carries the post-translational modification Phosphoserine; alternate. Serine 62 is a glycosylation site (O-linked (GlcNAc) serine; alternate). Residues 79 to 91 (EKDDDDEDGDGDG) show a composition bias toward acidic residues. The segment covering 96 to 108 (GKKKKKKKKKRGP) has biased composition (basic residues). Residue histidine 230 coordinates substrate. 3 residues coordinate a divalent metal cation: aspartate 250, aspartate 261, and histidine 330. Histidine 338 lines the substrate pocket. Positions 363 and 458 each coordinate a divalent metal cation.

Belongs to the peptidase M24A family. Methionine aminopeptidase eukaryotic type 2 subfamily. Binds EIF2S1 at low magnesium concentrations. Interacts strongly with the eIF-2 gamma-subunit EIF2S3. Co(2+) serves as cofactor. Zn(2+) is required as a cofactor. The cofactor is Mn(2+). It depends on Fe(2+) as a cofactor. Post-translationally, contains approximately 12 O-linked N-acetylglucosamine (GlcNAc) residues. O-glycosylation is required for EIF2S1 binding.

The protein resides in the cytoplasm. It carries out the reaction Release of N-terminal amino acids, preferentially methionine, from peptides and arylamides.. Its function is as follows. Cotranslationally removes the N-terminal methionine from nascent proteins. The N-terminal methionine is often cleaved when the second residue in the primary sequence is small and uncharged (Met-Ala-, Cys, Gly, Pro, Ser, Thr, or Val). Functionally, protects eukaryotic initiation factor EIF2S1 from translation-inhibiting phosphorylation by inhibitory kinases such as EIF2AK2/PKR and EIF2AK1/HCR. Plays a critical role in the regulation of protein synthesis. The polypeptide is Methionine aminopeptidase 2 (Bos taurus (Bovine)).